A 162-amino-acid polypeptide reads, in one-letter code: 2-C-methyl-D-erythritol 2,4-cyclodiphosphate synthase (162 aa).

Aspartate 12 and histidine 14 together coordinate a divalent metal cation. Residues 12–14 (DVH) and 38–39 (HS) each bind 4-CDP-2-C-methyl-D-erythritol 2-phosphate. Histidine 46 contributes to the a divalent metal cation binding site. 4-CDP-2-C-methyl-D-erythritol 2-phosphate-binding positions include 60-62 (DIG), 136-139 (TTTE), phenylalanine 143, and arginine 146.

This sequence belongs to the IspF family. Homotrimer. It depends on a divalent metal cation as a cofactor.

The catalysed reaction is 4-CDP-2-C-methyl-D-erythritol 2-phosphate = 2-C-methyl-D-erythritol 2,4-cyclic diphosphate + CMP. The protein operates within isoprenoid biosynthesis; isopentenyl diphosphate biosynthesis via DXP pathway; isopentenyl diphosphate from 1-deoxy-D-xylulose 5-phosphate: step 4/6. Involved in the biosynthesis of isopentenyl diphosphate (IPP) and dimethylallyl diphosphate (DMAPP), two major building blocks of isoprenoid compounds. Catalyzes the conversion of 4-diphosphocytidyl-2-C-methyl-D-erythritol 2-phosphate (CDP-ME2P) to 2-C-methyl-D-erythritol 2,4-cyclodiphosphate (ME-CPP) with a corresponding release of cytidine 5-monophosphate (CMP). The sequence is that of 2-C-methyl-D-erythritol 2,4-cyclodiphosphate synthase from Porphyromonas gingivalis (strain ATCC 33277 / DSM 20709 / CIP 103683 / JCM 12257 / NCTC 11834 / 2561).